The sequence spans 230 residues: MAVVSLSEMMEAGAHFGHQTRRWNPKMSRYIYSARNGVHIIDLVKTAVCMNSAYKWTRGAARSGKRFLFVGTKKQASEVVAQEAIRCGASYVNQRWLGGMLTNWTTMKARIDRLKDLERMESSGAIAMRPKKEGAVLRRELERLQKYLGGLKGMRRLPDVVVLVDQRRETNAVLEARKLDIPLVSMLDTNCDPDLCEIPIPCNDDAVRSVQLVLGRLADAINEGRHGPNE.

This sequence belongs to the universal ribosomal protein uS2 family.

This chain is Small ribosomal subunit protein uS2, found in Prochlorococcus marinus (strain NATL2A).